A 399-amino-acid polypeptide reads, in one-letter code: 4-hydroxy-3-methylbut-2-enyl diphosphate reductase (399 aa).

Cys-66 contacts [4Fe-4S] cluster. His-96 is a (2E)-4-hydroxy-3-methylbut-2-enyl diphosphate binding site. A dimethylallyl diphosphate-binding site is contributed by His-96. His-96 provides a ligand contact to isopentenyl diphosphate. Cys-157 provides a ligand contact to [4Fe-4S] cluster. His-185 is a (2E)-4-hydroxy-3-methylbut-2-enyl diphosphate binding site. His-185 is a binding site for dimethylallyl diphosphate. His-185 provides a ligand contact to isopentenyl diphosphate. The active-site Proton donor is Glu-187. Position 250 (Thr-250) interacts with (2E)-4-hydroxy-3-methylbut-2-enyl diphosphate. Cys-288 contributes to the [4Fe-4S] cluster binding site. Positions 317, 318, 319, and 380 each coordinate (2E)-4-hydroxy-3-methylbut-2-enyl diphosphate. Dimethylallyl diphosphate-binding residues include Ser-317, Ser-318, Asn-319, and Ser-380. Isopentenyl diphosphate contacts are provided by Ser-317, Ser-318, Asn-319, and Ser-380.

The protein belongs to the IspH family. The cofactor is [4Fe-4S] cluster.

The enzyme catalyses isopentenyl diphosphate + 2 oxidized [2Fe-2S]-[ferredoxin] + H2O = (2E)-4-hydroxy-3-methylbut-2-enyl diphosphate + 2 reduced [2Fe-2S]-[ferredoxin] + 2 H(+). It carries out the reaction dimethylallyl diphosphate + 2 oxidized [2Fe-2S]-[ferredoxin] + H2O = (2E)-4-hydroxy-3-methylbut-2-enyl diphosphate + 2 reduced [2Fe-2S]-[ferredoxin] + 2 H(+). Its pathway is isoprenoid biosynthesis; dimethylallyl diphosphate biosynthesis; dimethylallyl diphosphate from (2E)-4-hydroxy-3-methylbutenyl diphosphate: step 1/1. It functions in the pathway isoprenoid biosynthesis; isopentenyl diphosphate biosynthesis via DXP pathway; isopentenyl diphosphate from 1-deoxy-D-xylulose 5-phosphate: step 6/6. In terms of biological role, catalyzes the conversion of 1-hydroxy-2-methyl-2-(E)-butenyl 4-diphosphate (HMBPP) into a mixture of isopentenyl diphosphate (IPP) and dimethylallyl diphosphate (DMAPP). Acts in the terminal step of the DOXP/MEP pathway for isoprenoid precursor biosynthesis. In Synechococcus sp. (strain CC9902), this protein is 4-hydroxy-3-methylbut-2-enyl diphosphate reductase.